The sequence spans 374 residues: Methionine import ATP-binding protein MetN 2 (374 aa).

Residues Val-32–Leu-271 enclose the ABC transporter domain. Gly-68–Ser-75 is an ATP binding site.

The protein belongs to the ABC transporter superfamily. Methionine importer (TC 3.A.1.24) family. As to quaternary structure, the complex is composed of two ATP-binding proteins (MetN), two transmembrane proteins (MetI) and a solute-binding protein (MetQ).

It localises to the cell inner membrane. The catalysed reaction is L-methionine(out) + ATP + H2O = L-methionine(in) + ADP + phosphate + H(+). It catalyses the reaction D-methionine(out) + ATP + H2O = D-methionine(in) + ADP + phosphate + H(+). Functionally, part of the ABC transporter complex MetNIQ involved in methionine import. Responsible for energy coupling to the transport system. The protein is Methionine import ATP-binding protein MetN 2 of Pseudomonas fluorescens (strain Pf0-1).